Here is a 1031-residue protein sequence, read N- to C-terminus: GTPase activating protein Gyp51 (1031 aa).

Positions 1-32 (MAFTEANEREVQSSYEKENVKIIREEEAKDQE) are enriched in basic and acidic residues. Disordered stretches follow at residues 1 to 229 (MAFT…TNVN), 278 to 317 (FIEQ…SQND), 339 to 371 (DHLP…DHKA), 420 to 459 (NDEL…PSHV), and 490 to 520 (KKNT…STSP). Positions 43–59 (TGTSPDLNFFSTQNVMQ) are enriched in polar residues. Residues 62-78 (FEDEYSEFSNEDDEAEI) are compositionally biased toward acidic residues. The segment covering 105-117 (SQQSVEEQNNTTN) has biased composition (polar residues). Residues 195–217 (EDLKDEVKSVHEFNEPNDLRQQE) show a composition bias toward basic and acidic residues. Over residues 219–229 (SYSDDDDTNVN) the composition is skewed to acidic residues. Polar residues predominate over residues 278–306 (FIEQNGPNSDTVSGFKETSSIVNSSSTTE). Composition is skewed to polar residues over residues 420-429 (NDELSASGSQ), 436-455 (GTNS…NSEP), and 493-505 (TAFS…STNH). One can recognise a Rab-GAP TBC domain in the interval 610–806 (HNSHTVHTVV…HLYDILFLYG (197 aa)). Residues 798–818 (LYDILFLYGPGILFNFGLALL) traverse the membrane as a helical segment.

It belongs to the GYP5 family.

The protein localises to the membrane. The protein resides in the cytoplasm. In terms of biological role, GTPase-activating protein involved in ER to Golgi trafficking and polarized exocytosis. In Schizosaccharomyces pombe (strain 972 / ATCC 24843) (Fission yeast), this protein is GTPase activating protein Gyp51 (gyp51).